Here is a 550-residue protein sequence, read N- to C-terminus: CCR4-NOT transcription complex subunit 6-like-B (550 aa).

Residues 1–148 are required for interaction with cnot1, cnot3 and cnot7; the sequence is MPKEKYDPPD…LYQEPDGMRK (148 aa). LRR repeat units follow at residues 52 to 73, 75 to 96, 98 to 120, and 121 to 143; these read HLTVLHLSDNNLSRIPPDIAKL, NLVYLDLSSNKLRSLPAELGNV, SLRELLLNNNLLRVLPFELGRLF, and RLQTLGLKGNPLSQDILGLYQEP. Residues 153–550 are nuclease domain; that stretch reads MLDNLSVHPE…INGVHLPSRR (398 aa). Mg(2+) is bound at residue glutamate 235. Substrate is bound by residues glutamate 235, glutamate 271, histidine 355, and proline 360. Residue aspartate 405 participates in Mg(2+) binding. Residue aspartate 405 is the Proton donor/acceptor of the active site. Asparagine 407, asparagine 474, and phenylalanine 479 together coordinate substrate.

Belongs to the CCR4/nocturin family. Component of the CCR4-NOT complex. It depends on Mg(2+) as a cofactor.

The protein resides in the cytoplasm. It localises to the nucleus. The enzyme catalyses Exonucleolytic cleavage of poly(A) to 5'-AMP.. Its function is as follows. Poly(A) nuclease with 3'-5' RNase activity. Catalytic component of the CCR4-NOT complex which is one of the major cellular mRNA deadenylases and is linked to various cellular processes including bulk mRNA degradation, miRNA-mediated repression, translational repression during translational initiation and general transcription regulation. Additional complex functions may be a consequence of its influence on mRNA expression. This chain is CCR4-NOT transcription complex subunit 6-like-B (cnot6l-b), found in Xenopus laevis (African clawed frog).